The sequence spans 149 residues: Ribose-5-phosphate isomerase B (149 aa).

Residue 9-10 (DH) coordinates D-ribulose 5-phosphate. Cysteine 66 acts as the Proton acceptor in catalysis. 67–71 (GTGVG) is a binding site for D-ribulose 5-phosphate. Histidine 99 functions as the Proton donor in the catalytic mechanism. 4 residues coordinate D-ribulose 5-phosphate: asparagine 100, arginine 110, arginine 133, and arginine 137.

This sequence belongs to the LacAB/RpiB family. In terms of assembly, homodimer, and homotetramer.

It catalyses the reaction aldehydo-D-ribose 5-phosphate = D-ribulose 5-phosphate. It carries out the reaction D-allose 6-phosphate = D-allulose 6-phosphate. It functions in the pathway carbohydrate degradation; pentose phosphate pathway; D-ribose 5-phosphate from D-ribulose 5-phosphate (non-oxidative stage): step 1/1. Inhibited by iodoacetate and glucose 6-phosphate. In terms of biological role, catalyzes the interconversion of ribulose-5-P and ribose-5-P. It probably also has activity on D-allose 6-phosphate. In Escherichia coli (strain K12), this protein is Ribose-5-phosphate isomerase B.